The following is a 766-amino-acid chain: Ent-copalyl diphosphate synthase 3 (766 aa).

The transit peptide at Phe-1–Pro-30 directs the protein to the chloroplast. Residue Lys-222 participates in substrate binding. Mg(2+) is bound by residues Asp-354 and Asp-356. The DXDD motif motif lies at Asp-354 to Asp-357. Lys-440 serves as a coordination point for substrate.

Belongs to the terpene synthase family. Tpsc subfamily. Requires Mg(2+) as cofactor. As to expression, accumulates in leaves, and, at low levels, in germinating seeds.

The protein resides in the plastid. It localises to the chloroplast. The enzyme catalyses (2E,6E,10E)-geranylgeranyl diphosphate = ent-copalyl diphosphate. It participates in plant hormone biosynthesis; gibberellin biosynthesis. Its pathway is secondary metabolite biosynthesis; terpenoid biosynthesis. In terms of biological role, involved in the biosynthesis of ent-kaurene diterpenoids natural products such as oridonin, miltiradiene, eriocalyxin B and nezukol, known to exhibit antitumor, anti-inflammatory and antibacterial activities, and in the production of gibberellins phytohormones. Catalyzes the conversion of (2E,6E,10E)-geranylgeranyl diphosphate (GGPP) to ent-copalyl diphosphate (ent-CPP). In Isodon eriocalyx (Plectranthus eriocalyx), this protein is Ent-copalyl diphosphate synthase 3.